Reading from the N-terminus, the 328-residue chain is Phosphate acyltransferase (328 aa).

It belongs to the PlsX family. In terms of assembly, homodimer. Probably interacts with PlsY.

It is found in the cytoplasm. The enzyme catalyses a fatty acyl-[ACP] + phosphate = an acyl phosphate + holo-[ACP]. It participates in lipid metabolism; phospholipid metabolism. In terms of biological role, catalyzes the reversible formation of acyl-phosphate (acyl-PO(4)) from acyl-[acyl-carrier-protein] (acyl-ACP). This enzyme utilizes acyl-ACP as fatty acyl donor, but not acyl-CoA. The protein is Phosphate acyltransferase of Staphylococcus aureus (strain USA300).